A 161-amino-acid chain; its full sequence is Transcription elongation factor GreA (161 aa).

Residues 45 to 72 (NAEYHSAKEKLKLIDIQIAELNAVISKA) adopt a coiled-coil conformation.

Belongs to the GreA/GreB family.

Functionally, necessary for efficient RNA polymerase transcription elongation past template-encoded arresting sites. The arresting sites in DNA have the property of trapping a certain fraction of elongating RNA polymerases that pass through, resulting in locked ternary complexes. Cleavage of the nascent transcript by cleavage factors such as GreA or GreB allows the resumption of elongation from the new 3'terminus. GreA releases sequences of 2 to 3 nucleotides. The chain is Transcription elongation factor GreA from Aliarcobacter butzleri (strain RM4018) (Arcobacter butzleri).